An 88-amino-acid chain; its full sequence is Beta-insect excitatory toxin LqhIT1d (88 aa).

An N-terminal signal peptide occupies residues 1–18 (MKFFLLFLVVLPIMGVLG). The LCN-type CS-alpha/beta domain maps to 20 to 83 (KNGFAVDSNG…ISDTRKKLCD (64 aa)). Cystine bridges form between Cys34–Cys55, Cys40–Cys60, Cys44–Cys62, and Cys56–Cys82.

Belongs to the long (4 C-C) scorpion toxin superfamily. Sodium channel inhibitor family. Beta subfamily. Expressed by the venom gland.

The protein localises to the secreted. Functionally, excitatory insect toxins induce a spastic paralysis. They bind voltage-independently at site-4 of sodium channels (Nav) and shift the voltage of activation toward more negative potentials thereby affecting sodium channel activation and promoting spontaneous and repetitive firing. This Leiurus hebraeus (Hebrew deathstalker scorpion) protein is Beta-insect excitatory toxin LqhIT1d.